A 309-amino-acid polypeptide reads, in one-letter code: Homoserine kinase (309 aa).

91–101 (PIGSGLGSSAC) lines the ATP pocket.

This sequence belongs to the GHMP kinase family. Homoserine kinase subfamily.

The protein localises to the cytoplasm. The catalysed reaction is L-homoserine + ATP = O-phospho-L-homoserine + ADP + H(+). It functions in the pathway amino-acid biosynthesis; L-threonine biosynthesis; L-threonine from L-aspartate: step 4/5. In terms of biological role, catalyzes the ATP-dependent phosphorylation of L-homoserine to L-homoserine phosphate. The polypeptide is Homoserine kinase (Serratia proteamaculans (strain 568)).